The following is a 347-amino-acid chain: tRNA N6-adenosine threonylcarbamoyltransferase (347 aa).

Fe cation contacts are provided by histidine 115 and histidine 119. Residues 137-141, aspartate 170, glycine 183, and asparagine 281 contribute to the substrate site; that span reads LASGG. Residue aspartate 309 participates in Fe cation binding.

Belongs to the KAE1 / TsaD family. It depends on Fe(2+) as a cofactor.

Its subcellular location is the cytoplasm. It catalyses the reaction L-threonylcarbamoyladenylate + adenosine(37) in tRNA = N(6)-L-threonylcarbamoyladenosine(37) in tRNA + AMP + H(+). Its function is as follows. Required for the formation of a threonylcarbamoyl group on adenosine at position 37 (t(6)A37) in tRNAs that read codons beginning with adenine. Is involved in the transfer of the threonylcarbamoyl moiety of threonylcarbamoyl-AMP (TC-AMP) to the N6 group of A37, together with TsaE and TsaB. TsaD likely plays a direct catalytic role in this reaction. The sequence is that of tRNA N6-adenosine threonylcarbamoyltransferase from Methylorubrum populi (strain ATCC BAA-705 / NCIMB 13946 / BJ001) (Methylobacterium populi).